The sequence spans 113 residues: Large ribosomal subunit protein bL19 (113 aa).

It belongs to the bacterial ribosomal protein bL19 family.

Its function is as follows. This protein is located at the 30S-50S ribosomal subunit interface and may play a role in the structure and function of the aminoacyl-tRNA binding site. This is Large ribosomal subunit protein bL19 from Mycobacteroides abscessus (strain ATCC 19977 / DSM 44196 / CCUG 20993 / CIP 104536 / JCM 13569 / NCTC 13031 / TMC 1543 / L948) (Mycobacterium abscessus).